A 396-amino-acid chain; its full sequence is Subtilisin-like protease 5 (396 aa).

The signal sequence occupies residues 1–20; that stretch reads MTGFLTILSLSLAALSVTNA. A propeptide spanning residues 21-116 is cleaved from the precursor; it reads AQILSVPQGA…VEPDAIIKQH (96 aa). Residues 37-114 enclose the Inhibitor I9 domain; that stretch reads YIVVMKDDTS…AFVEPDAIIK (78 aa). Positions 125–396 constitute a Peptidase S8 domain; that stretch reads PWGLSRLSNR…SRLLYNGSGR (272 aa). Catalysis depends on charge relay system residues Asp-156 and His-187. 2 N-linked (GlcNAc...) asparagine glycosylation sites follow: Asn-230 and Asn-248. The active-site Charge relay system is the Ser-342. Positions 376–396 are disordered; sequence PTIRNPGPDTTSRLLYNGSGR. Asn-392 is a glycosylation site (N-linked (GlcNAc...) asparagine).

Belongs to the peptidase S8 family.

It localises to the secreted. Secreted subtilisin-like serine protease with keratinolytic activity that contributes to pathogenicity. The protein is Subtilisin-like protease 5 (SUB5) of Arthroderma gypseum (strain ATCC MYA-4604 / CBS 118893) (Microsporum gypseum).